The chain runs to 116 residues: Large ribosomal subunit protein bL17 (116 aa).

The protein belongs to the bacterial ribosomal protein bL17 family. In terms of assembly, part of the 50S ribosomal subunit. Contacts protein L32.

This is Large ribosomal subunit protein bL17 from Synechococcus elongatus (strain ATCC 33912 / PCC 7942 / FACHB-805) (Anacystis nidulans R2).